Consider the following 440-residue polypeptide: Microtubule-associated tumor suppressor 1 homolog A (440 aa).

The interval Lys44–Ser67 is disordered. Residues Ser69–Leu401 are a coiled coil. A disordered region spans residues Gly407–Arg440. A compositionally biased stretch (polar residues) spans Pro417–Phe432.

It belongs to the MTUS1 family. As to quaternary structure, homodimer.

Its subcellular location is the mitochondrion. It is found in the golgi apparatus. The protein localises to the cell membrane. The protein resides in the nucleus. Functionally, may inhibit cell proliferation. The chain is Microtubule-associated tumor suppressor 1 homolog A (mtus1a) from Danio rerio (Zebrafish).